The chain runs to 168 residues: Peptide deformylase 2 (168 aa).

Residues Cys91 and His133 each contribute to the Fe cation site. Glu134 is a catalytic residue. A Fe cation-binding site is contributed by His137.

It belongs to the polypeptide deformylase family. It depends on Fe(2+) as a cofactor.

The enzyme catalyses N-terminal N-formyl-L-methionyl-[peptide] + H2O = N-terminal L-methionyl-[peptide] + formate. Its function is as follows. Removes the formyl group from the N-terminal Met of newly synthesized proteins. Requires at least a dipeptide for an efficient rate of reaction. N-terminal L-methionine is a prerequisite for activity but the enzyme has broad specificity at other positions. The chain is Peptide deformylase 2 from Vibrio cholerae serotype O1 (strain ATCC 39315 / El Tor Inaba N16961).